Consider the following 104-residue polypeptide: MRSLLCAPLLLLLLSAGESAVITGACDKDLQCGEGMCCAVSLWIRSIRICTPLGSSGEDCHPLSHKVPFDGQRKHHTCPCLPNLVCGQTSPGKYKCLPEFKNVF.

A signal peptide spans 1–19; sequence MRSLLCAPLLLLLLSAGES. 5 disulfide bridges follow: cysteine 26-cysteine 38, cysteine 32-cysteine 50, cysteine 37-cysteine 78, cysteine 60-cysteine 86, and cysteine 80-cysteine 96.

The protein belongs to the AVIT (prokineticin) family. As to expression, expressed by the venom gland.

It localises to the secreted. In terms of biological role, potent agonist for both PKR1/PROKR1 and PKR2/PROKR2. Potently contracts gastrointestinal (GI) smooth muscle. In Varanus varius (Lace monitor lizard), this protein is AVIToxin-VAR1.